Here is a 1010-residue protein sequence, read N- to C-terminus: Glycine--tRNA ligase (1010 aa).

Positions 1 to 312 (MSEHPLTLQS…TSESVVPMIS (312 aa)) are glycine--tRNA ligase alpha subunit. Residues 313-1010 (STEDLLLEIG…SLCHWESVAV (698 aa)) form a glycine--tRNA ligase beta subunit region.

Belongs to the class-II aminoacyl-tRNA synthetase family.

The protein resides in the cytoplasm. It catalyses the reaction tRNA(Gly) + glycine + ATP = glycyl-tRNA(Gly) + AMP + diphosphate. The protein is Glycine--tRNA ligase (glyQS) of Chlamydia pneumoniae (Chlamydophila pneumoniae).